The following is a 154-amino-acid chain: Superoxide dismutase [Cu-Zn] (154 aa).

Cu cation contacts are provided by H47, H49, and H64. C58 and C147 are oxidised to a cystine. The Zn(2+) site is built by H64, H72, H81, and D84. Residue H121 coordinates Cu cation. Positions 125 to 136 (DDLGKGGNEESL) are enriched in basic and acidic residues. The disordered stretch occupies residues 125–144 (DDLGKGGNEESLKTGNAGPR). R144 contacts substrate.

This sequence belongs to the Cu-Zn superoxide dismutase family. In terms of assembly, homodimer. Requires Cu cation as cofactor. It depends on Zn(2+) as a cofactor.

The protein localises to the cytoplasm. It carries out the reaction 2 superoxide + 2 H(+) = H2O2 + O2. In terms of biological role, destroys radicals which are normally produced within the cells and which are toxic to biological systems. The sequence is that of Superoxide dismutase [Cu-Zn] (SOD1) from Candida glabrata (strain ATCC 2001 / BCRC 20586 / JCM 3761 / NBRC 0622 / NRRL Y-65 / CBS 138) (Yeast).